A 249-amino-acid chain; its full sequence is LexA repressor (249 aa).

Residues 1–25 (MAAAATGGRATSQPKKTTKGLTPRQ) are disordered. A DNA-binding region (H-T-H motif) is located at residues 45 to 65 (MREIGDTVGLASLSSVTHQLS). Residues Ser173 and Lys210 each act as for autocatalytic cleavage activity in the active site.

It belongs to the peptidase S24 family. In terms of assembly, homodimer.

It carries out the reaction Hydrolysis of Ala-|-Gly bond in repressor LexA.. Its function is as follows. Represses a number of genes involved in the response to DNA damage (SOS response), including recA and lexA. In the presence of single-stranded DNA, RecA interacts with LexA causing an autocatalytic cleavage which disrupts the DNA-binding part of LexA, leading to derepression of the SOS regulon and eventually DNA repair. This Pseudarthrobacter chlorophenolicus (strain ATCC 700700 / DSM 12829 / CIP 107037 / JCM 12360 / KCTC 9906 / NCIMB 13794 / A6) (Arthrobacter chlorophenolicus) protein is LexA repressor.